A 142-amino-acid chain; its full sequence is 3-hydroxyacyl-[acyl-carrier-protein] dehydratase FabZ (142 aa).

His48 is a catalytic residue.

This sequence belongs to the thioester dehydratase family. FabZ subfamily.

It is found in the cytoplasm. It carries out the reaction a (3R)-hydroxyacyl-[ACP] = a (2E)-enoyl-[ACP] + H2O. Involved in unsaturated fatty acids biosynthesis. Catalyzes the dehydration of short chain beta-hydroxyacyl-ACPs and long chain saturated and unsaturated beta-hydroxyacyl-ACPs. In Ruminiclostridium cellulolyticum (strain ATCC 35319 / DSM 5812 / JCM 6584 / H10) (Clostridium cellulolyticum), this protein is 3-hydroxyacyl-[acyl-carrier-protein] dehydratase FabZ.